Consider the following 226-residue polypeptide: Probable amino-acid ABC transporter permease protein YckA (226 aa).

The ABC transmembrane type-1 domain occupies 27 to 215 (IGYTLLISFV…AICSIAAVFQ (189 aa)). 5 helical membrane-spanning segments follow: residues 31-51 (LLIS…ISLA), 73-93 (VPIL…GIEF), 94-114 (SAVT…IAEI), 160-180 (VLLD…PELL), and 194-214 (MTMY…AAVF).

It belongs to the binding-protein-dependent transport system permease family. HisMQ subfamily.

It is found in the cell membrane. Part of a binding-protein-dependent transport system. Probably responsible for the translocation of the substrate across the membrane. This Bacillus subtilis (strain 168) protein is Probable amino-acid ABC transporter permease protein YckA (yckA).